A 386-amino-acid chain; its full sequence is Heat-inducible transcription repressor HrcA (386 aa).

Belongs to the HrcA family.

In terms of biological role, negative regulator of class I heat shock genes (grpE-dnaK-dnaJ and groELS operons). Prevents heat-shock induction of these operons. The protein is Heat-inducible transcription repressor HrcA of Chlamydia abortus (strain DSM 27085 / S26/3) (Chlamydophila abortus).